The sequence spans 514 residues: H/ACA ribonucleoprotein complex subunit DKC1 (514 aa).

Ala-2 is modified (N-acetylalanine). The interval 2 to 21 (ADAEVIILPKKHKKKKERKS) is nucleolar localization. Lys-20 participates in a covalent cross-link: Glycyl lysine isopeptide (Lys-Gly) (interchain with G-Cter in SUMO2). Phosphoserine is present on Ser-21. Glycyl lysine isopeptide (Lys-Gly) (interchain with G-Cter in SUMO2) cross-links involve residues Lys-39 and Lys-43. Catalysis depends on Asp-125, which acts as the Nucleophile. A Glycyl lysine isopeptide (Lys-Gly) (interchain with G-Cter in SUMO2) cross-link involves residue Lys-191. The region spanning 296–371 (HKRLVMKDSA…IVAKIKRVIM (76 aa)) is the PUA domain. Ser-387 is modified (phosphoserine). Residue Lys-394 forms a Glycyl lysine isopeptide (Lys-Gly) (interchain with G-Cter in SUMO2) linkage. Residue Lys-413 forms a Glycyl lysine isopeptide (Lys-Gly) (interchain with G-Cter in SUMO1); alternate linkage. Lys-413 participates in a covalent cross-link: Glycyl lysine isopeptide (Lys-Gly) (interchain with G-Cter in SUMO2); alternate. Residues Lys-424 and Lys-433 each participate in a glycyl lysine isopeptide (Lys-Gly) (interchain with G-Cter in SUMO2) cross-link. The segment at 443–514 (KTAKRKRESE…KAKEVELVSE (72 aa)) is disordered. Residues 446–514 (KRKRESESES…KAKEVELVSE (69 aa)) form a nuclear and nucleolar localization region. 3 positions are modified to phosphoserine: Ser-451, Ser-453, and Ser-455. At Thr-458 the chain carries Phosphothreonine. Residue Lys-467 forms a Glycyl lysine isopeptide (Lys-Gly) (interchain with G-Cter in SUMO2) linkage. The segment covering 468-480 (KEKKKSKKDKKAK) has biased composition (basic residues). Ser-485, Ser-494, and Ser-513 each carry phosphoserine.

Belongs to the pseudouridine synthase TruB family. As to quaternary structure, part of the H/ACA small nucleolar ribonucleoprotein (H/ACA snoRNP) complex, which contains NHP2/NOLA2, GAR1/NOLA1, NOP10/NOLA3, and DKC1/NOLA4, which is presumed to be the catalytic subunit. The complex contains a stable core formed by binding of one or two NOP10-DKC1 heterodimers to NHP2; GAR1 subsequently binds to this core via DKC1. The complex binds a box H/ACA small nucleolar RNA (snoRNA), which may target the specific site of modification within the RNA substrate. During assembly, the complex contains NAF1 instead of GAR1/NOLA1. The complex also interacts with TERC, which contains a 3'-terminal domain related to the box H/ACA snoRNAs. Specific interactions with snoRNAs or TERC are mediated by GAR1 and NHP2. Associates with NOLC1/NOPP140. H/ACA snoRNPs interact with the SMN complex, consisting of SMN1 or SMN2, GEMIN2/SIP1, DDX20/GEMIN3, and GEMIN4. This is mediated by interaction between GAR1 and SMN1 or SMN2. The SMN complex may be required for correct assembly of the H/ACA snoRNP complex. Component of the telomerase holoenzyme complex composed of one molecule of TERT, one molecule of WRAP53/TCAB1, two molecules of H/ACA ribonucleoprotein complex subunits DKC1, NOP10, NHP2 and GAR1, and a telomerase RNA template component (TERC). The telomerase holoenzyme complex is associated with TEP1, SMG6/EST1A and POT1. Interacts with SHQ1; this interaction may lead to the stabilization of DKC1, from the time of its synthesis until its association with NOP10, NHP2, and NAF1 at the nascent H/ACA RNA. Interacts with HMBOX1. Interacts with DHX36. In terms of tissue distribution, ubiquitously expressed.

Its subcellular location is the nucleus. The protein resides in the nucleolus. The protein localises to the cajal body. It localises to the cytoplasm. The enzyme catalyses uridine in 5S rRNA = pseudouridine in 5S rRNA. Catalytic subunit of H/ACA small nucleolar ribonucleoprotein (H/ACA snoRNP) complex, which catalyzes pseudouridylation of rRNA. This involves the isomerization of uridine such that the ribose is subsequently attached to C5, instead of the normal N1. Each rRNA can contain up to 100 pseudouridine ('psi') residues, which may serve to stabilize the conformation of rRNAs. Required for ribosome biogenesis and telomere maintenance. Also required for correct processing or intranuclear trafficking of TERC, the RNA component of the telomerase reverse transcriptase (TERT) holoenzyme. Its function is as follows. Promotes cell to cell and cell to substratum adhesion, increases the cell proliferation rate and leads to cytokeratin hyper-expression. The polypeptide is H/ACA ribonucleoprotein complex subunit DKC1 (Homo sapiens (Human)).